Consider the following 535-residue polypeptide: Signal transduction histidine-protein kinase AfsQ2 (535 aa).

Topologically, residues 1–30 (MTREHQGGTRGLAAARKGFWSGLRFTSLRL) are cytoplasmic. Residues 31–52 (RLVLVFGLVALTAAVSASGIAY) traverse the membrane as a helical segment. The Extracellular portion of the chain corresponds to 53–198 (WLNREAVLTR…SLEPEAKDLN (146 aa)). Residues 199–219 (SLAWSLGIATALALLGSALLA) traverse the membrane as a helical segment. Residues 220 to 535 (QALATTVLKP…DRGKDAKGQV (316 aa)) lie on the Cytoplasmic side of the membrane. An HAMP domain is found at 224–276 (TTVLKPVHRLGVAARRLGEGKLDTRLRVSGTDELADLSRTFNSAAENLEKRVA). Residues 291-510 (DMSHELRTPL…VFTLRLPQDP (220 aa)) enclose the Histidine kinase domain. A Phosphohistidine modification is found at His294. A disordered region spans residues 493–535 (ENAPEGGAVFTLRLPQDPSPPADEDGGPDEETEDRGKDAKGQV). A compositionally biased stretch (acidic residues) spans 514–525 (ADEDGGPDEETE). Basic and acidic residues predominate over residues 526–535 (DRGKDAKGQV).

The protein localises to the cell membrane. It catalyses the reaction ATP + protein L-histidine = ADP + protein N-phospho-L-histidine.. Functionally, forms part of a two-component regulatory system AfsQ1/AfsQ2 involved in secondary metabolism. May activate AfsQ1 by phosphorylation. This chain is Signal transduction histidine-protein kinase AfsQ2 (afsQ2), found in Streptomyces coelicolor (strain ATCC BAA-471 / A3(2) / M145).